We begin with the raw amino-acid sequence, 332 residues long: Ribonucleoside-diphosphate reductase small chain C (332 aa).

The Fe cation site is built by aspartate 76, glutamate 107, and histidine 110. Residue tyrosine 114 is part of the active site. Residues glutamate 169, glutamate 203, and histidine 206 each contribute to the Fe cation site.

This sequence belongs to the ribonucleoside diphosphate reductase small chain family. As to quaternary structure, homodimer and heterodimer with RNR2A. Heterotetramer of two R1 and two R2 chains. Interacts with CSN7 (via C-terminal tail). It depends on Fe cation as a cofactor. In terms of tissue distribution, expressed in roots, cauline and rosette leaves, stems and flowers.

The protein localises to the cytoplasm. It localises to the nucleus. It catalyses the reaction a 2'-deoxyribonucleoside 5'-diphosphate + [thioredoxin]-disulfide + H2O = a ribonucleoside 5'-diphosphate + [thioredoxin]-dithiol. Its function is as follows. Provides the precursors necessary for DNA synthesis. Catalyzes the biosynthesis of deoxyribonucleotides from the corresponding ribonucleotides. Involved in DNA damage repair and programmed cell death inhibition. This chain is Ribonucleoside-diphosphate reductase small chain C (TSO2), found in Arabidopsis thaliana (Mouse-ear cress).